Here is a 661-residue protein sequence, read N- to C-terminus: Putative DUF21 domain-containing protein At3g13070, chloroplastic (661 aa).

The transit peptide at 1-71 directs the protein to the chloroplast; it reads MMGMALELSV…RSCEFSYRSR (71 aa). The next 5 membrane-spanning stretches (helical) occupy residues 105–125, 162–182, 213–233, 239–259, and 285–305; these read GIVI…KVLA, GLIL…ETSI, FLTT…ALVT, IFGE…ILLL, and WLSL…MGIL. Residues 154–340 form the CNNM transmembrane domain; that stretch reads VLTVLREQGL…ELSGAIEEEE (187 aa). 2 CBS domains span residues 359–420 and 426–484; these read MTPL…LLES and MAHK…IFDE. Disordered stretches follow at residues 559–578 and 628–661; these read ESWE…QEPK and SSEE…KKQQ. Acidic residues-rich tracts occupy residues 560–570 and 630–643; these read SWEEDGEEEEG and EEDD…EDQS. Residues 648–661 show a composition bias toward basic and acidic residues; the sequence is LDEHVLADNSKKQQ.

Its subcellular location is the plastid. It localises to the chloroplast membrane. This Arabidopsis thaliana (Mouse-ear cress) protein is Putative DUF21 domain-containing protein At3g13070, chloroplastic (CBSDUFCH1).